The sequence spans 538 residues: Probable inorganic phosphate transporter 1-4 (538 aa).

The Cytoplasmic portion of the chain corresponds to 1–23 (MAGELKVLNALDSAKTQWYHFTA). Residues 24–44 (IVIAGMGFFTDAYDLFSISLV) form a helical membrane-spanning segment. The Extracellular portion of the chain corresponds to 45 to 69 (TKLLGRIYYFNPASKSPGSLPPNVS). The helical transmembrane segment at 70–90 (AAVNGVAFCGTLAGQLFFGWL) threads the bilayer. Residues 91-98 (GDKMGRKK) lie on the Cytoplasmic side of the membrane. Residues 99-119 (VYGMTLMLMVICCLASGLSFG) form a helical membrane-spanning segment. At 120-123 (SSAK) the chain is on the extracellular side. The helical transmembrane segment at 124–144 (GVMATLCFFRFWLGFGIGGDY) threads the bilayer. Residues 145-163 (PLSATIMSEYANKRTRGAF) are Cytoplasmic-facing. The helical transmembrane segment at 164-184 (IAAVFAMQGFGNLTGGIVAII) threads the bilayer. The Extracellular segment spans residues 185–210 (VSAAFKARFDAPAYRDDRAGSTVPQA). The helical transmembrane segment at 211-231 (DYAWRIVLMFGAIPALLTYYW) threads the bilayer. The Cytoplasmic segment spans residues 232–294 (RMKMPETARY…RQFLRRHGRH (63 aa)). A helical transmembrane segment spans residues 295–315 (LLGTTVCWFVLDIAFYSSNLF). Residues 316-346 (QKDIYTAVQWLPKADTMSALEEMFKISRAQT) are Extracellular-facing. The chain crosses the membrane as a helical span at residues 347 to 367 (LVALCGTIPGYWFTVFFIDII). Residues 368–369 (GR) are Cytoplasmic-facing. The chain crosses the membrane as a helical span at residues 370 to 390 (FVIQLGGFFFMTAFMLGLAVP). Over 391–396 (YHHWTT) the chain is Extracellular. Residues 397–417 (PGNHIGFVVMYAFTFFFANFG) form a helical membrane-spanning segment. The Cytoplasmic segment spans residues 418–440 (PNSTTFIVPAEIFPARLRSTCHG). The chain crosses the membrane as a helical span at residues 441–461 (ISAAAGKAGAIVGSFGFLYAA). Residues 462-481 (QSTDASKTDAGYPPGIGVRN) are Extracellular-facing. A helical transmembrane segment spans residues 482 to 502 (SLFFLAGCNVIGFFFTFLVPE). The Cytoplasmic portion of the chain corresponds to 503-538 (SKGKSLEELSGENEDDDDVPEAPSTADHRTAPAPPA). The segment at 507–538 (SLEELSGENEDDDDVPEAPSTADHRTAPAPPA) is disordered. The span at 511-522 (LSGENEDDDDVP) shows a compositional bias: acidic residues.

It belongs to the major facilitator superfamily. Phosphate:H(+) symporter (TC 2.A.1.9) family.

It is found in the membrane. In terms of biological role, high-affinity transporter for external inorganic phosphate. The polypeptide is Probable inorganic phosphate transporter 1-4 (PHT1-4) (Oryza sativa subsp. indica (Rice)).